A 286-amino-acid chain; its full sequence is Pantothenate synthetase (286 aa).

Residue 30–37 coordinates ATP; it reads MGNLHDGH. Histidine 37 functions as the Proton donor in the catalytic mechanism. Glutamine 61 provides a ligand contact to (R)-pantoate. Glutamine 61 contacts beta-alanine. 149 to 152 lines the ATP pocket; sequence GEKD. Glutamine 155 contributes to the (R)-pantoate binding site. Residues valine 178 and 186–189 contribute to the ATP site; that span reads LSSR.

The protein belongs to the pantothenate synthetase family. Homodimer.

It is found in the cytoplasm. The enzyme catalyses (R)-pantoate + beta-alanine + ATP = (R)-pantothenate + AMP + diphosphate + H(+). It functions in the pathway cofactor biosynthesis; (R)-pantothenate biosynthesis; (R)-pantothenate from (R)-pantoate and beta-alanine: step 1/1. Catalyzes the condensation of pantoate with beta-alanine in an ATP-dependent reaction via a pantoyl-adenylate intermediate. This chain is Pantothenate synthetase, found in Edwardsiella ictaluri (strain 93-146).